The following is a 300-amino-acid chain: Fe(3+) dicitrate-binding periplasmic protein FecB (300 aa).

The N-terminal stretch at 1–21 (MLAFIRFLFAGLLLVISHAFA) is a signal peptide. The 257-residue stretch at 39–295 (RIVVLELSFA…DTVKIFHHQP (257 aa)) folds into the Fe/B12 periplasmic-binding domain.

This sequence belongs to the bacterial solute-binding protein 8 family. In terms of assembly, the complex is composed of two ATP-binding proteins (FecE), two transmembrane proteins (FecC and FecD) and a solute-binding protein (FecB). Interacts with FecC and FecD.

It is found in the periplasm. In terms of biological role, part of the ABC transporter complex FecBCDE involved in citrate-dependent Fe(3+) uptake. Binds both iron-free and iron-loaded citrate although it binds iron-loaded citrate with a higher affinity. Binds different forms of Fe(3+)-citrate as well as citrate complexed with various representative Fe(3+)-mimics (Ga(3+), Al(3+), Sc(3+) and In(3+)) and a representative divalent metal ion (Mg(2+)). Can also bind various tricarboxylates in iron-free and iron-loaded form. This Escherichia coli (strain K12) protein is Fe(3+) dicitrate-binding periplasmic protein FecB.